Here is a 291-residue protein sequence, read N- to C-terminus: Small ribosomal subunit biogenesis GTPase RsgA 1 (291 aa).

The CP-type G domain occupies 63–221; the sequence is ENALVRPPVA…VADTPGFSSI (159 aa). Residues 112–115 and 164–172 contribute to the GTP site; these read SKMD and GQSGVGKST. Positions 245, 250, 252, and 258 each coordinate Zn(2+).

The protein belongs to the TRAFAC class YlqF/YawG GTPase family. RsgA subfamily. Monomer. Associates with 30S ribosomal subunit, binds 16S rRNA. It depends on Zn(2+) as a cofactor.

The protein localises to the cytoplasm. Its function is as follows. One of several proteins that assist in the late maturation steps of the functional core of the 30S ribosomal subunit. Helps release RbfA from mature subunits. May play a role in the assembly of ribosomal proteins into the subunit. Circularly permuted GTPase that catalyzes slow GTP hydrolysis, GTPase activity is stimulated by the 30S ribosomal subunit. The sequence is that of Small ribosomal subunit biogenesis GTPase RsgA 1 from Listeria monocytogenes serotype 4b (strain F2365).